Consider the following 171-residue polypeptide: MTVLKKNEKIKLELKEKLVMVNRVCKVTKGRRYFSFTALVIKGDENGVVGYGFGKAKEAQDAIYKAGEKAKKKLLKINIIKGGTIPHEQEAKYCGARVFICPASEGTGIIAGGAVRSVLEAVGLTNVLSKSKGSSNKINCIKATILALSKLRTVNTIALERGISISKILIG.

Residues 14 to 77 enclose the S5 DRBM domain; the sequence is LKEKLVMVNR…EKAKKKLLKI (64 aa).

This sequence belongs to the universal ribosomal protein uS5 family. As to quaternary structure, part of the 30S ribosomal subunit. Contacts proteins S4 and S8.

In terms of biological role, with S4 and S12 plays an important role in translational accuracy. Functionally, located at the back of the 30S subunit body where it stabilizes the conformation of the head with respect to the body. The polypeptide is Small ribosomal subunit protein uS5 (Karelsulcia muelleri (strain GWSS) (Sulcia muelleri)).